The sequence spans 362 residues: 3-isopropylmalate dehydrogenase (362 aa).

Gly-76 to Glu-87 serves as a coordination point for NAD(+). 4 residues coordinate substrate: Arg-94, Arg-104, Arg-133, and Asp-222. 3 residues coordinate Mg(2+): Asp-222, Asp-247, and Asp-251. NAD(+) is bound at residue Gly-286–Asn-297.

The protein belongs to the isocitrate and isopropylmalate dehydrogenases family. As to quaternary structure, homodimer. The cofactor is Mg(2+). Requires Mn(2+) as cofactor.

It is found in the cytoplasm. It carries out the reaction (2R,3S)-3-isopropylmalate + NAD(+) = 4-methyl-2-oxopentanoate + CO2 + NADH. It functions in the pathway amino-acid biosynthesis; L-leucine biosynthesis; L-leucine from 3-methyl-2-oxobutanoate: step 3/4. Catalyzes the oxidation of 3-carboxy-2-hydroxy-4-methylpentanoate (3-isopropylmalate) to 3-carboxy-4-methyl-2-oxopentanoate. The product decarboxylates to 4-methyl-2 oxopentanoate. The polypeptide is 3-isopropylmalate dehydrogenase (LEU2) (Pichia angusta (Yeast)).